The primary structure comprises 299 residues: Small ribosomal subunit protein uS3 (299 aa).

A KH type-2 domain is found at 39–107 (VREYLKAKLK…PVAVNIEEVR (69 aa)). Residues 214–299 (PVIKTDERED…AVAPGDAKGE (86 aa)) are disordered. Residues 217 to 248 (KTDEREDDRRNRRGPRSDRPAGDRRPPSRDGA) show a composition bias toward basic and acidic residues. Residues 257–282 (ADAGAAAPTDKPADGAAPAAADGPKA) show a composition bias toward low complexity.

Belongs to the universal ribosomal protein uS3 family. In terms of assembly, part of the 30S ribosomal subunit. Forms a tight complex with proteins S10 and S14.

Functionally, binds the lower part of the 30S subunit head. Binds mRNA in the 70S ribosome, positioning it for translation. The chain is Small ribosomal subunit protein uS3 from Methylibium petroleiphilum (strain ATCC BAA-1232 / LMG 22953 / PM1).